We begin with the raw amino-acid sequence, 418 residues long: 1-acylglycerol-3-phosphate O-acyltransferase (418 aa).

Positions 121–251 (PTLVMVHGYG…RATWKGAVLN (131 aa)) constitute an AB hydrolase-1 domain. The GXSXG motif lies at 197-201 (GHSFG). An HXXXXD motif motif is present at residues 379–384 (HFVFID).

The protein belongs to the peptidase S33 family. ABHD4/ABHD5 subfamily.

Its subcellular location is the cytoplasm. It catalyses the reaction a 1-acyl-sn-glycero-3-phosphate + an acyl-CoA = a 1,2-diacyl-sn-glycero-3-phosphate + CoA. Lysophosphatidic acid acyltransferase which functions in phosphatidic acid biosynthesis. Is highly specific for lysophosphatidic acid and able to use different acyl-CoA donors. May regulate neutral lipid accumulation and participate in the regulation of lipid turnover in vegetative cells. Possesses additional triacylglycerol lipase and phospholipase A2 activities in vitro. Is not active as esterase or lysophospholipase. The polypeptide is 1-acylglycerol-3-phosphate O-acyltransferase (Arabidopsis thaliana (Mouse-ear cress)).